Consider the following 117-residue polypeptide: Large ribosomal subunit protein uL23 (117 aa).

Belongs to the universal ribosomal protein uL23 family. As to quaternary structure, part of the 50S ribosomal subunit. Contacts protein L29, and trigger factor when it is bound to the ribosome.

In terms of biological role, one of the early assembly proteins it binds 23S rRNA. One of the proteins that surrounds the polypeptide exit tunnel on the outside of the ribosome. Forms the main docking site for trigger factor binding to the ribosome. The sequence is that of Large ribosomal subunit protein uL23 from Ruminiclostridium cellulolyticum (strain ATCC 35319 / DSM 5812 / JCM 6584 / H10) (Clostridium cellulolyticum).